The following is a 270-amino-acid chain: 3-methyl-2-oxobutanoate hydroxymethyltransferase (270 aa).

The Mg(2+) site is built by aspartate 41 and aspartate 80. 3-methyl-2-oxobutanoate-binding positions include 41–42, aspartate 80, and lysine 109; that span reads DS. Glutamate 111 serves as a coordination point for Mg(2+). Glutamate 178 acts as the Proton acceptor in catalysis.

Belongs to the PanB family. In terms of assembly, homodecamer; pentamer of dimers. The cofactor is Mg(2+).

It is found in the cytoplasm. It carries out the reaction 3-methyl-2-oxobutanoate + (6R)-5,10-methylene-5,6,7,8-tetrahydrofolate + H2O = 2-dehydropantoate + (6S)-5,6,7,8-tetrahydrofolate. Its pathway is cofactor biosynthesis; (R)-pantothenate biosynthesis; (R)-pantoate from 3-methyl-2-oxobutanoate: step 1/2. Functionally, catalyzes the reversible reaction in which hydroxymethyl group from 5,10-methylenetetrahydrofolate is transferred onto alpha-ketoisovalerate to form ketopantoate. The sequence is that of 3-methyl-2-oxobutanoate hydroxymethyltransferase from Thermotoga neapolitana (strain ATCC 49049 / DSM 4359 / NBRC 107923 / NS-E).